A 1527-amino-acid polypeptide reads, in one-letter code: Rho guanine nucleotide exchange factor 11 (1527 aa).

A disordered region spans residues 1–56; that stretch reads MSIRLPHSIDRSASKKQSHLSSPIASWLSSLSSLGDSTPERTSPSHHRQPSDTSET. Phosphoserine occurs at positions 2, 30, 32, and 51. Residues 19 to 37 are compositionally biased toward low complexity; sequence HLSSPIASWLSSLSSLGDS. The 80-residue stretch at 64–143 folds into the PDZ domain; that stretch reads CVIIQKDQHG…LTLLGSSPPS (80 aa). Residues 216–247 form a disordered region; sequence PCGETSQRTCEGRLSVDSQEADSGLDSGTERF. Phosphoserine occurs at positions 262 and 268. Threonine 271 carries the phosphothreonine modification. Residues serine 272 and serine 288 each carry the phosphoserine modification. The region spanning 323-503 is the RGSL domain; the sequence is ESDIIFQDLE…NTFMSHAGIR (181 aa). The stretch at 461–487 forms a coiled coil; sequence LRERQMAEKQLAALGDILSKYEEDRSA. Disordered stretches follow at residues 506–569 and 582–687; these read ESRS…QSIK and NSHQ…GRRS. Over residues 509 to 519 the composition is skewed to polar residues; sequence SSCTAEKTQSA. Composition is skewed to basic and acidic residues over residues 539–551 and 624–645; these read SKKE…DKKR and KGRE…RSDV. A phosphoserine mark is found at serine 643 and serine 671. Low complexity predominate over residues 656–672; that stretch reads LHQSASSSASSLSTRSL. Threonine 676 and threonine 680 each carry phosphothreonine. Residues 742-931 form the DH domain; it reads DRQEVINELF…REILKFVNEA (190 aa). Residues 973 to 1087 enclose the PH domain; it reads KMIHEGPLTW…WMELLEEAVQ (115 aa). Disordered stretches follow at residues 1090 to 1184, 1231 to 1321, and 1379 to 1411; these read TKHP…NRGI, QAAG…TEPA, and AGPL…PQPY. Positions 1126 to 1138 are enriched in basic and acidic residues; it reads EVYHTEKEPKKLP. Residues 1242–1251 are compositionally biased toward polar residues; sequence PTPSVVSITS. A phosphoserine mark is found at serine 1299 and serine 1304. Residues 1312–1321 are compositionally biased toward low complexity; that stretch reads AAEAASTEPA. Residues serine 1462 and serine 1463 each carry the phosphoserine modification. Residues threonine 1467 and threonine 1480 each carry the phosphothreonine modification. Residues 1480 to 1527 form a disordered region; sequence TDYSLSPPAKEALASDSQNGQEQGSCPEEGSDIALEDSATDTAVSPGP. Position 1485 is a phosphoserine (serine 1485). Residues 1494–1503 show a composition bias toward polar residues; sequence SDSQNGQEQG. A compositionally biased stretch (acidic residues) spans 1508–1518; the sequence is EGSDIALEDSA.

As to quaternary structure, interacts with RHOA, GNA13 and SLC1A6. Interacts with GNA12, PLXNB1 and PLXNB2. Interacts (via DH domain) with GCSAM (via C-terminus). Found in a complex with ARHGEF11 and ARHGEF12; binding to ARHGEF11 and ARHGEF12 enhances CDC42 GEF activity of PLEKHG4B, and PLEKHG4B, in turn, inhibits ARHGEF11- and ARHGEF12-mediated RHOA activation. Post-translationally, phosphorylated by MAP kinase p38 (MAPK11, MAPK12, MAPK13 and/or MAPK14). In terms of processing, ubiquitinated by the BCR(KLHL20) E3 ubiquitin ligase complex when previously phosphorylated by MAP kinase p38 (MAPK11, MAPK12, MAPK13 and/or MAPK14), leading to its degradation, thereby restricting RhoA activity and facilitating growth cone spreading and neurite outgrowth.

The protein resides in the cytoplasm. Its subcellular location is the membrane. Functionally, may play a role in the regulation of RhoA GTPase by guanine nucleotide-binding alpha-12 (GNA12) and alpha-13 (GNA13). Acts as guanine nucleotide exchange factor (GEF) for RhoA GTPase and may act as GTPase-activating protein (GAP) for GNA12 and GNA13. Involved in neurotrophin-induced neurite outgrowth. This Rattus norvegicus (Rat) protein is Rho guanine nucleotide exchange factor 11 (Arhgef11).